The chain runs to 463 residues: Chromosomal replication initiator protein DnaA (463 aa).

The segment at 1–83 (MSLTLWQQCL…LRFEVGSKPV (83 aa)) is domain I, interacts with DnaA modulators. Positions 83 to 126 (VAQAISQPVMVSAHASAPGVVSRPAPTRPSWDNVPALAELSYRS) are domain II. A domain III, AAA+ region region spans residues 127–343 (NVNTKHNFDN…GALNRVIANA (217 aa)). ATP contacts are provided by glycine 171, glycine 173, lysine 174, and threonine 175. Positions 344–463 (NFTGRAITID…FSNLIRTLSS (120 aa)) are domain IV, binds dsDNA.

Belongs to the DnaA family. As to quaternary structure, oligomerizes as a right-handed, spiral filament on DNA at oriC.

It localises to the cytoplasm. In terms of biological role, plays an essential role in the initiation and regulation of chromosomal replication. ATP-DnaA binds to the origin of replication (oriC) to initiate formation of the DNA replication initiation complex once per cell cycle. Binds the DnaA box (a 9 base pair repeat at the origin) and separates the double-stranded (ds)DNA. Forms a right-handed helical filament on oriC DNA; dsDNA binds to the exterior of the filament while single-stranded (ss)DNA is stabiized in the filament's interior. The ATP-DnaA-oriC complex binds and stabilizes one strand of the AT-rich DNA unwinding element (DUE), permitting loading of DNA polymerase. After initiation quickly degrades to an ADP-DnaA complex that is not apt for DNA replication. Binds acidic phospholipids. The sequence is that of Chromosomal replication initiator protein DnaA from Erwinia tasmaniensis (strain DSM 17950 / CFBP 7177 / CIP 109463 / NCPPB 4357 / Et1/99).